An 87-amino-acid polypeptide reads, in one-letter code: Large ribosomal subunit protein uL23c (87 aa).

It belongs to the universal ribosomal protein uL23 family. As to quaternary structure, part of the 50S ribosomal subunit.

Its subcellular location is the plastid. It localises to the chloroplast. Its function is as follows. Binds to 23S rRNA. This Bigelowiella natans (Pedinomonas minutissima) protein is Large ribosomal subunit protein uL23c (rpl23).